The primary structure comprises 535 residues: Unconventional prefoldin RPB5 interactor 1 (535 aa).

Met1 is modified (N-acetylmethionine). Disordered stretches follow at residues 1-23 (MEAP…PALV), 223-330 (LLGE…VGDN), 352-383 (KNTT…QELP), and 412-431 (SRSR…AAEF). The segment covering 7-18 (ETPPDPSPPSAP) has biased composition (pro residues). Composition is skewed to polar residues over residues 253–265 (TNVN…TDSH) and 276–296 (EPFS…SSSY). Acidic residues predominate over residues 299 to 320 (DDDDDDDDDDDDDNIDDDDGDN). Ser372 bears the Phosphoserine; by RPS6KB1 mark. Residue Thr373 is modified to Phosphothreonine. Residues 417–427 (NSVCSDTSESS) show a composition bias toward polar residues. Ser442 carries the post-translational modification Phosphoserine.

This sequence belongs to the RNA polymerase II subunit 5-mediating protein family. Homodimer. Component of the PAQosome complex which is responsible for the biogenesis of several protein complexes and which consists of R2TP complex members RUVBL1, RUVBL2, RPAP3 and PIH1D1, URI complex members PFDN2, PFDN6, PDRG1, UXT and URI1 as well as ASDURF, POLR2E and DNAAF10/WDR92. Interacts with POLR2E/RPB5, RUVBL2 and RUVBL1. Interacts with PFDN2, PFDN4 and STAP1; the interactions are phosphorylation-dependent and occur in a growth-dependent manner in the mitochondrion. Interacts with UXT. Interacts with PPP1CC; the interaction is phosphorylation-dependent and occurs in a growth factor-dependent manner. Interacts (via the middle C-terminal region) with GTF2F1 and GTF2F2. Interacts with DMAP1. Interacts with TSC1 and TSC2. Interacts with PRPF8 and EFTUD2 in a ZNHIT2-dependent manner. In terms of processing, phosphorylated. Phosphorylation occurs essentially on serine residues. Phosphorylation occurs in response to androgen treatment in prostate cancer cells in a mTOR-dependent manner. Phosphorylated; hyperhosphorylated in mitochondria in a mTORC-dependent signaling pathway. Phosphorylated at Ser-372 by RPS6KB1 in a growth factor- and rapamycin-dependent manner. S6K1-mediated mitochondrial phosphorylation at Ser-372 disrupts the URI1-PPP1CC complex in the mitochondrion, relieves PPP1CC phosphatase inhibition activity and hence engages a negative feedback diminishing RPS6KB1 kinase activity, preventing sustained S6K1-dependent signaling. Ubiquitous. Expressed in ovarian cancers (at protein level). Expressed strongly in skeletal muscle. Expressed weakly in brain, heart, pancreas and in prostate epithelial cells.

It is found in the nucleus. The protein localises to the cytoplasm. The protein resides in the mitochondrion. Its subcellular location is the cell projection. It localises to the dendrite. In terms of biological role, involved in gene transcription regulation. Acts as a transcriptional repressor in concert with the corepressor UXT to regulate androgen receptor (AR) transcription. May act as a tumor suppressor to repress AR-mediated gene transcription and to inhibit anchorage-independent growth in prostate cancer cells. Required for cell survival in ovarian cancer cells. Together with UXT, associates with chromatin to the NKX3-1 promoter region. Antagonizes transcriptional modulation via hepatitis B virus X protein. Plays a central role in maintaining S6K1 signaling and BAD phosphorylation under normal growth conditions thereby protecting cells from potential deleterious effects of sustained S6K1 signaling. The URI1-PPP1CC complex acts as a central component of a negative feedback mechanism that counteracts excessive S6K1 survival signaling to BAD in response to growth factors. Mediates inhibition of PPP1CC phosphatase activity in mitochondria. Coordinates the regulation of nutrient-sensitive gene expression availability in a mTOR-dependent manner. Seems to be a scaffolding protein able to assemble a prefoldin-like complex that contains PFDs and proteins with roles in transcription and ubiquitination. The sequence is that of Unconventional prefoldin RPB5 interactor 1 (URI1) from Homo sapiens (Human).